The sequence spans 247 residues: Carboxy-S-adenosyl-L-methionine synthase (247 aa).

S-adenosyl-L-methionine is bound by residues Y39, 64–66, 89–90, 117–118, N132, and R199; these read GCS, DN, and DI.

Belongs to the class I-like SAM-binding methyltransferase superfamily. Cx-SAM synthase family. As to quaternary structure, homodimer.

The catalysed reaction is prephenate + S-adenosyl-L-methionine = carboxy-S-adenosyl-L-methionine + 3-phenylpyruvate + H2O. Its function is as follows. Catalyzes the conversion of S-adenosyl-L-methionine (SAM) to carboxy-S-adenosyl-L-methionine (Cx-SAM). This is Carboxy-S-adenosyl-L-methionine synthase from Cronobacter sakazakii (strain ATCC BAA-894) (Enterobacter sakazakii).